The sequence spans 273 residues: Shikimate dehydrogenase (NADP(+)) (273 aa).

Shikimate-binding positions include 15–17 and Thr62; that span reads SKS. Catalysis depends on Lys66, which acts as the Proton acceptor. Residue Glu78 participates in NADP(+) binding. Asn87 and Asp103 together coordinate shikimate. NADP(+) contacts are provided by residues 127 to 131, 150 to 155, and Met213; these read GAGGA and NRTQEK. Tyr215 contacts shikimate. Gly237 contributes to the NADP(+) binding site.

Belongs to the shikimate dehydrogenase family. As to quaternary structure, homodimer.

It carries out the reaction shikimate + NADP(+) = 3-dehydroshikimate + NADPH + H(+). Its pathway is metabolic intermediate biosynthesis; chorismate biosynthesis; chorismate from D-erythrose 4-phosphate and phosphoenolpyruvate: step 4/7. Its function is as follows. Involved in the biosynthesis of the chorismate, which leads to the biosynthesis of aromatic amino acids. Catalyzes the reversible NADPH linked reduction of 3-dehydroshikimate (DHSA) to yield shikimate (SA). The polypeptide is Shikimate dehydrogenase (NADP(+)) (Shewanella woodyi (strain ATCC 51908 / MS32)).